A 341-amino-acid chain; its full sequence is Cytochrome c biogenesis protein CcsA (341 aa).

The next 8 membrane-spanning stretches (helical) occupy residues 16–36 (LILL…GMSI), 37–57 (LPTL…TLLG), 68–88 (LSNL…VHLI), 97–117 (LVGV…ALSL), 142–162 (VMML…AFLI), 249–269 (IIGL…VWAN), 276–296 (WSWD…AAYL), and 310–330 (AILA…VNLL).

Belongs to the CcmF/CycK/Ccl1/NrfE/CcsA family. In terms of assembly, may interact with ccs1.

The protein resides in the cellular thylakoid membrane. Functionally, required during biogenesis of c-type cytochromes (cytochrome c6 and cytochrome f) at the step of heme attachment. The polypeptide is Cytochrome c biogenesis protein CcsA (Rippkaea orientalis (strain PCC 8801 / RF-1) (Cyanothece sp. (strain PCC 8801))).